We begin with the raw amino-acid sequence, 185 residues long: Ribosome-recycling factor (185 aa).

This sequence belongs to the RRF family.

Its subcellular location is the cytoplasm. Responsible for the release of ribosomes from messenger RNA at the termination of protein biosynthesis. May increase the efficiency of translation by recycling ribosomes from one round of translation to another. This Enterococcus faecalis (strain ATCC 700802 / V583) protein is Ribosome-recycling factor.